The sequence spans 908 residues: Serine/threonine-protein kinase WARTS homolog (908 aa).

Positions 42 to 70 (EIRVGRHRAKLDEIRESLKAYEHEAGLLS) form a coiled coil. 2 stretches are compositionally biased toward low complexity: residues 115 to 125 (VSSAAVSNSNS) and 168 to 181 (PSTTISSTPSTTTE). Disordered stretches follow at residues 115 to 134 (VSSAAVSNSNSFRTEGGGHK), 162 to 183 (MIRNGNPSTTISSTPSTTTEES), 203 to 225 (NNNAPQYSPGYSRPPPPAYDSSP), and 388 to 412 (KSRAQPPPPQYNQPSEPPPKRVSSP). The segment covering 392 to 404 (QPPPPQYNQPSEP) has biased composition (pro residues). Residues 439-470 (YMEQHVERLLQQYKEREKRMKQLEKEMVSAQL) adopt a coiled-coil conformation. Residues 502–807 (FTVISHIGVG…TAQVKNHPWF (306 aa)) enclose the Protein kinase domain. Residues 508–516 (IGVGAFGKV) and lysine 531 contribute to the ATP site. Aspartate 625 functions as the Proton acceptor in the catalytic mechanism. An AGC-kinase C-terminal domain is found at 808–874 (RGIDWVNLRK…RHFFDTDSVG (67 aa)).

It belongs to the protein kinase superfamily. AGC Ser/Thr protein kinase family. As to quaternary structure, interacts (via N-terminus) with yap-1 (via WW domain). Requires Mg(2+) as cofactor. Expressed in muscles and epithelial tissues including pharynx, intestine and hypodermis. Expressed in vulval and spermathecal seam cells.

The protein localises to the cytoplasm. It is found in the apical cell membrane. It carries out the reaction L-seryl-[protein] + ATP = O-phospho-L-seryl-[protein] + ADP + H(+). The catalysed reaction is L-threonyl-[protein] + ATP = O-phospho-L-threonyl-[protein] + ADP + H(+). Its function is as follows. Phosphorylates yap-1 which may negatively regulate yap-1 nuclear localization. Plays an essential role in larval development. Regulates growth, the formation of gut granules, lifespan and cell and body sizes probably in synergy with the TGF-beta sma/mab pathway. Does not appear to regulate apoptosis and proliferation. In addition, may synergize with the TGF-beta daf-7 dauer pathway to regulate entry into the dauer stage. Maintains the cellular integrity of intestinal cells by regulating the localization of apical actin and junctional proteins. The chain is Serine/threonine-protein kinase WARTS homolog from Caenorhabditis elegans.